Consider the following 376-residue polypeptide: Chaperone protein DnaJ (376 aa).

In terms of domain architecture, J spans 5-70; sequence DYYEVLGVGR…DKKAAYDQFG (66 aa). The segment at 132–210 adopts a CR-type zinc-finger fold; sequence GLTKELRIPT…CHGDGRVEKS (79 aa). Zn(2+) is bound by residues C145, C148, C162, C165, C184, C187, C198, and C201. CXXCXGXG motif repeat units follow at residues 145–152, 162–169, 184–191, and 198–205; these read CDLCDGSG, CTTCHGQG, CPTCHGRG, and CTKCHGDG.

This sequence belongs to the DnaJ family. In terms of assembly, homodimer. Zn(2+) is required as a cofactor.

Its subcellular location is the cytoplasm. Functionally, participates actively in the response to hyperosmotic and heat shock by preventing the aggregation of stress-denatured proteins and by disaggregating proteins, also in an autonomous, DnaK-independent fashion. Unfolded proteins bind initially to DnaJ; upon interaction with the DnaJ-bound protein, DnaK hydrolyzes its bound ATP, resulting in the formation of a stable complex. GrpE releases ADP from DnaK; ATP binding to DnaK triggers the release of the substrate protein, thus completing the reaction cycle. Several rounds of ATP-dependent interactions between DnaJ, DnaK and GrpE are required for fully efficient folding. Also involved, together with DnaK and GrpE, in the DNA replication of plasmids through activation of initiation proteins. This Shewanella putrefaciens (strain CN-32 / ATCC BAA-453) protein is Chaperone protein DnaJ.